Consider the following 245-residue polypeptide: Ribonuclease PH (245 aa).

Residues Arg86 and 124-126 contribute to the phosphate site; that span reads GTR.

Belongs to the RNase PH family. In terms of assembly, homohexameric ring arranged as a trimer of dimers.

The enzyme catalyses tRNA(n+1) + phosphate = tRNA(n) + a ribonucleoside 5'-diphosphate. Phosphorolytic 3'-5' exoribonuclease that plays an important role in tRNA 3'-end maturation. Removes nucleotide residues following the 3'-CCA terminus of tRNAs; can also add nucleotides to the ends of RNA molecules by using nucleoside diphosphates as substrates, but this may not be physiologically important. Probably plays a role in initiation of 16S rRNA degradation (leading to ribosome degradation) during starvation. This is Ribonuclease PH from Bacillus cytotoxicus (strain DSM 22905 / CIP 110041 / 391-98 / NVH 391-98).